The sequence spans 252 residues: Imidazole glycerol phosphate synthase subunit HisF (252 aa).

Catalysis depends on residues D11 and D130.

Belongs to the HisA/HisF family. As to quaternary structure, heterodimer of HisH and HisF.

It localises to the cytoplasm. The catalysed reaction is 5-[(5-phospho-1-deoxy-D-ribulos-1-ylimino)methylamino]-1-(5-phospho-beta-D-ribosyl)imidazole-4-carboxamide + L-glutamine = D-erythro-1-(imidazol-4-yl)glycerol 3-phosphate + 5-amino-1-(5-phospho-beta-D-ribosyl)imidazole-4-carboxamide + L-glutamate + H(+). Its pathway is amino-acid biosynthesis; L-histidine biosynthesis; L-histidine from 5-phospho-alpha-D-ribose 1-diphosphate: step 5/9. In terms of biological role, IGPS catalyzes the conversion of PRFAR and glutamine to IGP, AICAR and glutamate. The HisF subunit catalyzes the cyclization activity that produces IGP and AICAR from PRFAR using the ammonia provided by the HisH subunit. The protein is Imidazole glycerol phosphate synthase subunit HisF of Bacillus cereus (strain Q1).